The following is a 386-amino-acid chain: MIRGERVIGILAAGGSGQRAGVAKQWLVLGGESVLRRSARVLAACDAVDGLVVVVPPGDEARGEAELAGLGKPVRAVAGGPARADSVRNGLAAADGAVVLVHDAARPFASAALAGRVAEAAARDGAALAALPATDTVKRAEAGAEVPRVLETLDRRTVWLAQTPQGFRRAVLEQAYAAAGPSASAATDECALVEAAGAPVTLVPGEPGNFKITGPDDVRRARALLEAPVATGVGYDTHRFAPGRRLVLGGVEFEGDGLLGHSDADVCAHAIGDAILGAAGLGDLGRHFPDTDPRWKGVSSLALLREIAAKAAERGWRVGNCDVTLAAKRPKIAPRAEEMRARLAGALGISPAQVNVKATTGEGMGFVGREEGVAAHAIALLVRAAG.

The 2-C-methyl-D-erythritol 4-phosphate cytidylyltransferase stretch occupies residues 1-229 (MIRGERVIGI…RARALLEAPV (229 aa)). The 2-C-methyl-D-erythritol 2,4-cyclodiphosphate synthase stretch occupies residues 230 to 386 (ATGVGYDTHR…AIALLVRAAG (157 aa)). A divalent metal cation contacts are provided by aspartate 236 and histidine 238. Residues 236–238 (DTH) and 261–262 (HS) each bind 4-CDP-2-C-methyl-D-erythritol 2-phosphate. Histidine 269 lines the a divalent metal cation pocket. Residues 283-285 (DLG), 288-292 (FPDTD), 359-362 (TTGE), phenylalanine 366, and arginine 369 contribute to the 4-CDP-2-C-methyl-D-erythritol 2-phosphate site.

In the N-terminal section; belongs to the IspD/TarI cytidylyltransferase family. IspD subfamily. It in the C-terminal section; belongs to the IspF family. A divalent metal cation is required as a cofactor.

The enzyme catalyses 2-C-methyl-D-erythritol 4-phosphate + CTP + H(+) = 4-CDP-2-C-methyl-D-erythritol + diphosphate. It catalyses the reaction 4-CDP-2-C-methyl-D-erythritol 2-phosphate = 2-C-methyl-D-erythritol 2,4-cyclic diphosphate + CMP. It participates in isoprenoid biosynthesis; isopentenyl diphosphate biosynthesis via DXP pathway; isopentenyl diphosphate from 1-deoxy-D-xylulose 5-phosphate: step 2/6. Its pathway is isoprenoid biosynthesis; isopentenyl diphosphate biosynthesis via DXP pathway; isopentenyl diphosphate from 1-deoxy-D-xylulose 5-phosphate: step 4/6. Functionally, bifunctional enzyme that catalyzes the formation of 4-diphosphocytidyl-2-C-methyl-D-erythritol from CTP and 2-C-methyl-D-erythritol 4-phosphate (MEP) (IspD), and catalyzes the conversion of 4-diphosphocytidyl-2-C-methyl-D-erythritol 2-phosphate (CDP-ME2P) to 2-C-methyl-D-erythritol 2,4-cyclodiphosphate (ME-CPP) with a corresponding release of cytidine 5-monophosphate (CMP) (IspF). The sequence is that of Bifunctional enzyme IspD/IspF from Anaeromyxobacter dehalogenans (strain 2CP-C).